The chain runs to 119 residues: Beta-2-microglobulin (119 aa).

The first 20 residues, 1–20 (MSRSVALAVLALLSLSGLEA), serve as a signal peptide directing secretion. Residues 25 to 114 (PKIQVYSRHP…VTLSGPRTVK (90 aa)) enclose the Ig-like C1-type domain. Cysteines 45 and 100 form a disulfide.

The protein belongs to the beta-2-microglobulin family. Heterodimer of an alpha chain and a beta chain. Beta-2-microglobulin is the beta-chain of major histocompatibility complex class I molecules.

It is found in the secreted. Functionally, component of the class I major histocompatibility complex (MHC). Involved in the presentation of peptide antigens to the immune system. The protein is Beta-2-microglobulin (B2M) of Papio anubis (Olive baboon).